Consider the following 360-residue polypeptide: Phospho-N-acetylmuramoyl-pentapeptide-transferase (360 aa).

10 consecutive transmembrane segments (helical) span residues 27-47 (IVSL…LIAW), 72-92 (PTMG…MWAY), 94-114 (SNPY…VGFI), 132-152 (WKYF…YSIG), 168-188 (IMPQ…VGTS), 199-219 (GLAI…AWAT), 236-256 (AGEL…FLWF), 263-283 (VFMG…IAVL), 288-308 (FLLV…ILQV), and 338-358 (VIVR…ATLK).

It belongs to the glycosyltransferase 4 family. MraY subfamily. Requires Mg(2+) as cofactor.

It is found in the cell inner membrane. It carries out the reaction UDP-N-acetyl-alpha-D-muramoyl-L-alanyl-gamma-D-glutamyl-meso-2,6-diaminopimeloyl-D-alanyl-D-alanine + di-trans,octa-cis-undecaprenyl phosphate = di-trans,octa-cis-undecaprenyl diphospho-N-acetyl-alpha-D-muramoyl-L-alanyl-D-glutamyl-meso-2,6-diaminopimeloyl-D-alanyl-D-alanine + UMP. Its pathway is cell wall biogenesis; peptidoglycan biosynthesis. In terms of biological role, catalyzes the initial step of the lipid cycle reactions in the biosynthesis of the cell wall peptidoglycan: transfers peptidoglycan precursor phospho-MurNAc-pentapeptide from UDP-MurNAc-pentapeptide onto the lipid carrier undecaprenyl phosphate, yielding undecaprenyl-pyrophosphoryl-MurNAc-pentapeptide, known as lipid I. This chain is Phospho-N-acetylmuramoyl-pentapeptide-transferase, found in Yersinia pseudotuberculosis serotype O:1b (strain IP 31758).